The following is a 309-amino-acid chain: tRNA uridine(34) hydroxylase (309 aa).

The Rhodanese domain maps to 129–223 (SEPGTIVIDT…YLEEVPAEQS (95 aa)). The active-site Cysteine persulfide intermediate is Cys-183. The interval 288-309 (YAERQRQVELAQARGKRPHIGS) is disordered.

It belongs to the TrhO family.

It catalyses the reaction uridine(34) in tRNA + AH2 + O2 = 5-hydroxyuridine(34) in tRNA + A + H2O. Catalyzes oxygen-dependent 5-hydroxyuridine (ho5U) modification at position 34 in tRNAs. The polypeptide is tRNA uridine(34) hydroxylase (Mesorhizobium japonicum (strain LMG 29417 / CECT 9101 / MAFF 303099) (Mesorhizobium loti (strain MAFF 303099))).